A 224-amino-acid polypeptide reads, in one-letter code: Flagellar L-ring protein (224 aa).

The N-terminal stretch at 1–15 (MARYFILAVALLLTA) is a signal peptide. The N-palmitoyl cysteine moiety is linked to residue cysteine 16. Cysteine 16 carries S-diacylglycerol cysteine lipidation.

This sequence belongs to the FlgH family. As to quaternary structure, the basal body constitutes a major portion of the flagellar organelle and consists of four rings (L,P,S, and M) mounted on a central rod.

The protein localises to the cell outer membrane. The protein resides in the bacterial flagellum basal body. Its function is as follows. Assembles around the rod to form the L-ring and probably protects the motor/basal body from shearing forces during rotation. The chain is Flagellar L-ring protein from Shewanella sp. (strain MR-7).